Consider the following 432-residue polypeptide: Peptidase B (432 aa).

Residues K196 and D201 each contribute to the Mn(2+) site. The active site involves K208. D219, D278, and E280 together coordinate Mn(2+). The active site involves R282.

It belongs to the peptidase M17 family. As to quaternary structure, homohexamer. Mn(2+) serves as cofactor.

It is found in the cytoplasm. It carries out the reaction Release of an N-terminal amino acid, Xaa, from a peptide or arylamide. Xaa is preferably Glu or Asp but may be other amino acids, including Leu, Met, His, Cys and Gln.. In terms of biological role, probably plays an important role in intracellular peptide degradation. The chain is Peptidase B from Yersinia pseudotuberculosis serotype O:1b (strain IP 31758).